A 224-amino-acid chain; its full sequence is UPF0758 protein PSPA7_6095 (224 aa).

In terms of domain architecture, MPN spans V102–M224. Zn(2+) contacts are provided by H173, H175, and D186. The short motif at H173–D186 is the JAMM motif element.

This sequence belongs to the UPF0758 family.

This chain is UPF0758 protein PSPA7_6095, found in Pseudomonas paraeruginosa (strain DSM 24068 / PA7) (Pseudomonas aeruginosa (strain PA7)).